A 1389-amino-acid polypeptide reads, in one-letter code: DNA-directed RNA polymerase subunit beta'' (1389 aa).

Cys224, Cys295, Cys302, and Cys305 together coordinate Zn(2+).

This sequence belongs to the RNA polymerase beta' chain family. RpoC2 subfamily. In terms of assembly, in plastids the minimal PEP RNA polymerase catalytic core is composed of four subunits: alpha, beta, beta', and beta''. When a (nuclear-encoded) sigma factor is associated with the core the holoenzyme is formed, which can initiate transcription. The cofactor is Zn(2+).

Its subcellular location is the plastid. The protein resides in the chloroplast. It carries out the reaction RNA(n) + a ribonucleoside 5'-triphosphate = RNA(n+1) + diphosphate. Its function is as follows. DNA-dependent RNA polymerase catalyzes the transcription of DNA into RNA using the four ribonucleoside triphosphates as substrates. The sequence is that of DNA-directed RNA polymerase subunit beta'' from Atropa belladonna (Belladonna).